We begin with the raw amino-acid sequence, 368 residues long: tRNA-specific 2-thiouridylase MnmA (368 aa).

Residues Ala-6–Ser-13 and Met-32 contribute to the ATP site. Cys-92 serves as the catalytic Nucleophile. A disulfide bond links Cys-92 and Cys-186. Residue Gly-116 coordinates ATP. The interaction with tRNA stretch occupies residues Lys-134–Gln-136. The active-site Cysteine persulfide intermediate is the Cys-186. Residues Arg-292–Tyr-293 are interaction with tRNA.

Belongs to the MnmA/TRMU family.

Its subcellular location is the cytoplasm. It carries out the reaction S-sulfanyl-L-cysteinyl-[protein] + uridine(34) in tRNA + AH2 + ATP = 2-thiouridine(34) in tRNA + L-cysteinyl-[protein] + A + AMP + diphosphate + H(+). In terms of biological role, catalyzes the 2-thiolation of uridine at the wobble position (U34) of tRNA, leading to the formation of s(2)U34. The chain is tRNA-specific 2-thiouridylase MnmA from Campylobacter hominis (strain ATCC BAA-381 / DSM 21671 / CCUG 45161 / LMG 19568 / NCTC 13146 / CH001A).